The sequence spans 239 residues: Tryptophan synthase alpha chain (239 aa).

Active-site proton acceptor residues include Glu-34 and Asp-45.

It belongs to the TrpA family. As to quaternary structure, tetramer of two alpha and two beta chains.

The catalysed reaction is (1S,2R)-1-C-(indol-3-yl)glycerol 3-phosphate + L-serine = D-glyceraldehyde 3-phosphate + L-tryptophan + H2O. It participates in amino-acid biosynthesis; L-tryptophan biosynthesis; L-tryptophan from chorismate: step 5/5. In terms of biological role, the alpha subunit is responsible for the aldol cleavage of indoleglycerol phosphate to indole and glyceraldehyde 3-phosphate. This is Tryptophan synthase alpha chain from Thermotoga petrophila (strain ATCC BAA-488 / DSM 13995 / JCM 10881 / RKU-1).